A 203-amino-acid polypeptide reads, in one-letter code: bMERB domain-containing protein 1 (203 aa).

The region spanning 3 to 149 (LKQSLSVHLE…EQEEDKEMAD (147 aa)) is the bMERB domain. A disordered region spans residues 161–184 (VTKTSASSRAEKKAEPPPSKPTVA).

This chain is bMERB domain-containing protein 1 (Bmerb1), found in Mus musculus (Mouse).